The following is a 617-amino-acid chain: V-type proton ATPase catalytic subunit A (617 aa).

250 to 257 (GAFGCGKT) serves as a coordination point for ATP. Serine 384 bears the Phosphoserine; by AMPK mark.

Belongs to the ATPase alpha/beta chains family. V-ATPase is a heteromultimeric enzyme made up of two complexes: the ATP-hydrolytic V1 complex and the proton translocation V0 complex. The V1 complex consists of three catalytic AB heterodimers that form a heterohexamer, three peripheral stalks each consisting of EG heterodimers, one central rotor including subunits D and F, and the regulatory subunits C and H. The proton translocation complex V0 consists of the proton transport subunit a, a ring of proteolipid subunits c9c'', rotary subunit d, subunits e and f, and the accessory subunits ATP6AP1/Ac45 and ATP6AP2/PRR. Interacts with the V0 complex V-ATPase subunit a4 ATP6V0A4. Interacts with WFS1. Interacts with alpha-crystallin B chain/CRYAB and with MTOR, forming a ternary complex. Post-translationally, phosphorylation at Ser-384 by AMPK down-regulates its enzyme activity.

Its subcellular location is the cytoplasm. It localises to the cytosol. It is found in the cytoplasmic vesicle. The protein resides in the secretory vesicle. The protein localises to the clathrin-coated vesicle membrane. Its subcellular location is the lysosome. It catalyses the reaction ATP + H2O + 4 H(+)(in) = ADP + phosphate + 5 H(+)(out). ATP hydrolysis occurs at the interface between the nucleotide-binding domains of subunits A and B. ATP hydrolysis triggers a conformational change in the subunits D and F, which induces a shift of subunit d. The c-ring is subsequently rotated and results in a continuous proton translocation across the membrane. In terms of biological role, catalytic subunit of the V1 complex of vacuolar(H+)-ATPase (V-ATPase), a multisubunit enzyme composed of a peripheral complex (V1) that hydrolyzes ATP and a membrane integral complex (V0) that translocates protons. V-ATPase is responsible for acidifying and maintaining the pH of intracellular compartments and in some cell types, is targeted to the plasma membrane, where it is responsible for acidifying the extracellular environment. In aerobic conditions, involved in intracellular iron homeostasis, thus triggering the activity of Fe(2+) prolyl hydroxylase (PHD) enzymes, and leading to HIF1A hydroxylation and subsequent proteasomal degradation. May play a role in neurite development and synaptic connectivity. The protein is V-type proton ATPase catalytic subunit A (Atp6v1a) of Mus musculus (Mouse).